A 470-amino-acid chain; its full sequence is Cysteine--tRNA ligase (470 aa).

Residue Cys-27 coordinates Zn(2+). The 'HIGH' region motif lies at 29 to 39 (PTVYNFFHIGN). Positions 211, 236, and 240 each coordinate Zn(2+). The short motif at 268 to 272 (KMSKS) is the 'KMSKS' region element. Residue Lys-271 participates in ATP binding.

Belongs to the class-I aminoacyl-tRNA synthetase family. As to quaternary structure, monomer. Zn(2+) serves as cofactor.

It localises to the cytoplasm. The catalysed reaction is tRNA(Cys) + L-cysteine + ATP = L-cysteinyl-tRNA(Cys) + AMP + diphosphate. This Clostridium botulinum (strain Alaska E43 / Type E3) protein is Cysteine--tRNA ligase.